The primary structure comprises 183 residues: Caspase recruitment domain-containing protein 19 (183 aa).

A disulfide bridge links Cys7 with Cys77. The CARD domain maps to 8-99 (DRLVQDTPFL…PLHSCLPSRH (92 aa)). A helical transmembrane segment spans residues 122–142 (GPVAFLTCLGLAAGLALLIYC).

In terms of assembly, associates with BCL10 by CARD-CARD interaction.

The protein localises to the endoplasmic reticulum membrane. Its subcellular location is the mitochondrion membrane. In terms of biological role, plays a role in inhibiting the effects of BCL10-induced activation of NF-kappa-B. May inhibit the phosphorylation of BCL10 in a CARD-dependent manner. In Bos taurus (Bovine), this protein is Caspase recruitment domain-containing protein 19 (CARD19).